The sequence spans 505 residues: Lysine--tRNA ligase (505 aa).

Residues glutamate 415 and glutamate 422 each coordinate Mg(2+).

It belongs to the class-II aminoacyl-tRNA synthetase family. In terms of assembly, homodimer. Mg(2+) serves as cofactor.

The protein localises to the cytoplasm. It carries out the reaction tRNA(Lys) + L-lysine + ATP = L-lysyl-tRNA(Lys) + AMP + diphosphate. The protein is Lysine--tRNA ligase of Edwardsiella ictaluri (strain 93-146).